The chain runs to 399 residues: Paraneoplastic antigen-like protein 6A (399 aa).

Belongs to the PNMA family. Expressed in the brain.

The sequence is that of Paraneoplastic antigen-like protein 6A from Homo sapiens (Human).